The primary structure comprises 60 residues: DNA-directed RNA polymerase subunit Rpo6 (60 aa).

The protein belongs to the archaeal Rpo6/eukaryotic RPB6 RNA polymerase subunit family. In terms of assembly, part of the RNA polymerase complex.

Its subcellular location is the cytoplasm. The enzyme catalyses RNA(n) + a ribonucleoside 5'-triphosphate = RNA(n+1) + diphosphate. DNA-dependent RNA polymerase (RNAP) catalyzes the transcription of DNA into RNA using the four ribonucleoside triphosphates as substrates. This Picrophilus torridus (strain ATCC 700027 / DSM 9790 / JCM 10055 / NBRC 100828 / KAW 2/3) protein is DNA-directed RNA polymerase subunit Rpo6.